Here is an 802-residue protein sequence, read N- to C-terminus: Pyrophosphate-energized membrane proton pump 2 (802 aa).

6 helical membrane-spanning segments follow: residues 45–65 (VLSIILLFCFGAIFYMGASTS), 66–86 (PIIVFVFTVCIISFLLSIYLT), 118–138 (YSTISKMAILLAFVILCIYLF), 160–180 (VAAFLLGALCSGIAGYVGMWV), 206–226 (AGGFSALVVVGMAVIGIAILY), and 246–266 (LPLLLVGYGFGASFVALFAQL). K273 serves as a coordination point for substrate. D276, D280, and D306 together coordinate Mg(2+). 5 consecutive transmembrane segments (helical) span residues 348 to 368 (FILFPLVVHSFDLIISSIGIL), 386 to 406 (MAVLQKGYSLTIILAVITFGA), 421 to 441 (WFNFALCGLVGIITAYIFVWI), 468 to 488 (IIAGVSLGLESTALPVLTISV), and 511 to 531 (GGLFGTAVATMGMLSTAAYVL). D541 and N568 together coordinate Mg(2+). 4 helical membrane passes run 577–597 (FAIGSAALASFLLFSAYMDEV), 615–635 (VFVGGLLGAMLIFLFSAWACA), 686–706 (GALAIASPIVVGLVFRILGYY), and 716–736 (VVASMLMFATVCGILMALFLN). The Mg(2+) site is built by D743 and D773. K776 contributes to the substrate binding site. Residues 782–802 (SIHVLIKMLATITLVMAPVFL) traverse the membrane as a helical segment.

The protein belongs to the H(+)-translocating pyrophosphatase (TC 3.A.10) family. K(+)-insensitive subfamily. Monomer. As to expression, ubiquitous. Mostly expressed in cotyledons, roots and flowers. Especially high levels in trichomes, sepals and stamen filaments.

Its subcellular location is the golgi apparatus membrane. The catalysed reaction is diphosphate + H2O + H(+)(in) = 2 phosphate + 2 H(+)(out). With respect to regulation, activated by Mg(+) but not by K(+). Inhibited by Ca(2+). Functionally, pyrophosphatase active in both inorganic pyrophosphate hydrolysis and H(+) translocation. This is Pyrophosphate-energized membrane proton pump 2 (AVPL1) from Arabidopsis thaliana (Mouse-ear cress).